Here is a 460-residue protein sequence, read N- to C-terminus: Proline--tRNA ligase (460 aa).

It belongs to the class-II aminoacyl-tRNA synthetase family. ProS type 3 subfamily. As to quaternary structure, homodimer.

It is found in the cytoplasm. The enzyme catalyses tRNA(Pro) + L-proline + ATP = L-prolyl-tRNA(Pro) + AMP + diphosphate. In terms of biological role, catalyzes the attachment of proline to tRNA(Pro) in a two-step reaction: proline is first activated by ATP to form Pro-AMP and then transferred to the acceptor end of tRNA(Pro). This Methanococcus maripaludis (strain C5 / ATCC BAA-1333) protein is Proline--tRNA ligase.